Consider the following 235-residue polypeptide: tRNA (guanine-N(1)-)-methyltransferase (235 aa).

S-adenosyl-L-methionine is bound by residues Gly112 and 131 to 136 (LGDFVL).

It belongs to the RNA methyltransferase TrmD family. Homodimer.

The protein resides in the cytoplasm. The catalysed reaction is guanosine(37) in tRNA + S-adenosyl-L-methionine = N(1)-methylguanosine(37) in tRNA + S-adenosyl-L-homocysteine + H(+). Its function is as follows. Specifically methylates guanosine-37 in various tRNAs. In Synechococcus elongatus (strain ATCC 33912 / PCC 7942 / FACHB-805) (Anacystis nidulans R2), this protein is tRNA (guanine-N(1)-)-methyltransferase.